A 141-amino-acid chain; its full sequence is Putative pre-16S rRNA nuclease (141 aa).

This sequence belongs to the YqgF nuclease family.

It localises to the cytoplasm. Could be a nuclease involved in processing of the 5'-end of pre-16S rRNA. This is Putative pre-16S rRNA nuclease from Shewanella denitrificans (strain OS217 / ATCC BAA-1090 / DSM 15013).